The chain runs to 210 residues: MSDPIKTALSLVPMVIEQTNRGERAYDIFSRLLKERIIFINGPVEDGMAMLVCAQLLFLEAENPKKEISLYINSPGGVVTSGMAIYDTMQFIRPPVSTLCMGQAASMGSLLLTAGAKGHRFTLPNARIMVHQPSGGFQGQASDIERHAQDIIKMKQRLNEIYVQHTGQNYDVIERTLDRDHFMTAEEAKQFGLVDDVIQYRAETEKEEKD.

Catalysis depends on serine 106, which acts as the Nucleophile. The active site involves histidine 131.

This sequence belongs to the peptidase S14 family. In terms of assembly, fourteen ClpP subunits assemble into 2 heptameric rings which stack back to back to give a disk-like structure with a central cavity, resembling the structure of eukaryotic proteasomes.

It is found in the cytoplasm. The catalysed reaction is Hydrolysis of proteins to small peptides in the presence of ATP and magnesium. alpha-casein is the usual test substrate. In the absence of ATP, only oligopeptides shorter than five residues are hydrolyzed (such as succinyl-Leu-Tyr-|-NHMec, and Leu-Tyr-Leu-|-Tyr-Trp, in which cleavage of the -Tyr-|-Leu- and -Tyr-|-Trp bonds also occurs).. In terms of biological role, cleaves peptides in various proteins in a process that requires ATP hydrolysis. Has a chymotrypsin-like activity. Plays a major role in the degradation of misfolded proteins. This is ATP-dependent Clp protease proteolytic subunit from Bartonella henselae (strain ATCC 49882 / DSM 28221 / CCUG 30454 / Houston 1) (Rochalimaea henselae).